A 67-amino-acid polypeptide reads, in one-letter code: Vespin (67 aa).

The N-terminal stretch at 1–21 is a signal peptide; the sequence is MHPIIWELSHMVDLQAAAQKL.

Expressed by the venom gland.

The protein resides in the secreted. Shows contractile activity on isolated ileum smooth muscle. The polypeptide is Vespin (Vespa magnifica (Hornet)).